Here is a 302-residue protein sequence, read N- to C-terminus: Pyridoxal 5'-phosphate synthase subunit PdxS (302 aa).

Asp32 lines the D-ribose 5-phosphate pocket. Lys89 functions as the Schiff-base intermediate with D-ribose 5-phosphate in the catalytic mechanism. D-ribose 5-phosphate is bound at residue Gly161. Residue Arg173 participates in D-glyceraldehyde 3-phosphate binding. D-ribose 5-phosphate is bound by residues Gly222 and 243–244; that span reads GS. A disordered region spans residues 276 to 302; that stretch reads ASNIGEGMQGDPNADLPEDERMQDRGN.

It belongs to the PdxS/SNZ family. As to quaternary structure, in the presence of PdxT, forms a dodecamer of heterodimers.

It catalyses the reaction aldehydo-D-ribose 5-phosphate + D-glyceraldehyde 3-phosphate + L-glutamine = pyridoxal 5'-phosphate + L-glutamate + phosphate + 3 H2O + H(+). It participates in cofactor biosynthesis; pyridoxal 5'-phosphate biosynthesis. Catalyzes the formation of pyridoxal 5'-phosphate from ribose 5-phosphate (RBP), glyceraldehyde 3-phosphate (G3P) and ammonia. The ammonia is provided by the PdxT subunit. Can also use ribulose 5-phosphate and dihydroxyacetone phosphate as substrates, resulting from enzyme-catalyzed isomerization of RBP and G3P, respectively. This is Pyridoxal 5'-phosphate synthase subunit PdxS from Halobacterium salinarum (strain ATCC 29341 / DSM 671 / R1).